We begin with the raw amino-acid sequence, 467 residues long: Asparagine--tRNA ligase (467 aa).

The protein belongs to the class-II aminoacyl-tRNA synthetase family. As to quaternary structure, homodimer.

It is found in the cytoplasm. The enzyme catalyses tRNA(Asn) + L-asparagine + ATP = L-asparaginyl-tRNA(Asn) + AMP + diphosphate + H(+). This chain is Asparagine--tRNA ligase, found in Legionella pneumophila (strain Lens).